The sequence spans 230 residues: Membrane protein (230 aa).

Residues 1–24 (MSSPTTPVPVISWTADEAIKFLKE) are Virion surface-facing. The helical transmembrane segment at 25-45 (WNFSLGIIVLFITIILQFGYT) threads the bilayer. At 46–55 (SRSMFVYVIK) the chain is on the intravirion side. Residues 56 to 76 (MVILWLMWPLTIILTIFNCVY) traverse the membrane as a helical segment. At 77–84 (ALNNVYLG) the chain is on the virion surface side. A helical transmembrane segment spans residues 85-105 (FSIVFTIVAIIMWVVYFVNSI). Over 106 to 228 (RLFIRTGSWW…SGMDTALLRN (123 aa)) the chain is Intravirion.

The protein belongs to the betacoronaviruses M protein family. As to quaternary structure, homomultimer. Interacts with envelope E protein in the budding compartment of the host cell, which is located between endoplasmic reticulum and the Golgi complex. Forms a complex with HE and S proteins. Interacts with nucleocapsid N protein. This interaction probably participates in RNA packaging into the virus.

The protein localises to the virion membrane. It is found in the host Golgi apparatus membrane. Its function is as follows. Component of the viral envelope that plays a central role in virus morphogenesis and assembly via its interactions with other viral proteins. The chain is Membrane protein from Porcine hemagglutinating encephalomyelitis virus (strain 67N) (HEV-67N).